The sequence spans 274 residues: Diaminopimelate epimerase (274 aa).

Asparagine 11, glutamine 44, and asparagine 64 together coordinate substrate. Catalysis depends on cysteine 73, which acts as the Proton donor. Residues 74 to 75, asparagine 157, asparagine 190, and 208 to 209 contribute to the substrate site; these read GN and ER. Cysteine 217 acts as the Proton acceptor in catalysis. Residue 218 to 219 participates in substrate binding; that stretch reads GS.

It belongs to the diaminopimelate epimerase family. In terms of assembly, homodimer.

It localises to the cytoplasm. It carries out the reaction (2S,6S)-2,6-diaminopimelate = meso-2,6-diaminopimelate. It functions in the pathway amino-acid biosynthesis; L-lysine biosynthesis via DAP pathway; DL-2,6-diaminopimelate from LL-2,6-diaminopimelate: step 1/1. Catalyzes the stereoinversion of LL-2,6-diaminopimelate (L,L-DAP) to meso-diaminopimelate (meso-DAP), a precursor of L-lysine and an essential component of the bacterial peptidoglycan. This is Diaminopimelate epimerase from Histophilus somni (strain 2336) (Haemophilus somnus).